Consider the following 461-residue polypeptide: SWM histone demethylase complex subunit phf1 (461 aa).

Residues 79–130 (PYGGMTMPASSSSGATSVPPEQDPSLSVSFNRLPKSASTKTKNGRIRSSRRE) form a disordered region. Residues 102-119 (PSLSVSFNRLPKSASTKT) show a composition bias toward polar residues. The PHD-type zinc finger occupies 190 to 246 (VTLCSVCQRGHSPLSNRIVFCDGCNSPYHQLCHHPPIDDATVQDVDAEWFCMKCQYR).

As to quaternary structure, component of the SWM histone demethylase complex composed of at least lsd1, lsd2, phf1 and phf2.

It localises to the nucleus. Functionally, component of the SWM histone demethylase complex that specifically demethylates H3K9me2, a specific tag for epigenetic transcriptional activation, thereby acting as a corepressor. Has a role in regulating heterochromatin propagation and euchromatic transcription. The protein is SWM histone demethylase complex subunit phf1 (phf1) of Schizosaccharomyces pombe (strain 972 / ATCC 24843) (Fission yeast).